The following is a 769-amino-acid chain: Subtilisin-like protease 3 (769 aa).

Residues asparagine 68, asparagine 102, asparagine 108, asparagine 295, asparagine 316, and asparagine 356 are each glycosylated (N-linked (GlcNAc...) asparagine). The segment covering 293–302 (KINHSNKHKN) has biased composition (basic residues). The segment at 293 to 329 (KINHSNKHKNNNNNNNNNDYHNNNKSNYHSHSSAKCQ) is disordered. A compositionally biased stretch (low complexity) spans 303–325 (NNNNNNNNDYHNNNKSNYHSHSS). Residues 345-756 (GYDIIQMEEG…GGFINVYDLV (412 aa)) enclose the Peptidase S8 domain. Residue aspartate 372 is the Charge relay system of the active site. Residues 468-493 (NIKSSDNIKSSDNINSSDNIKSSDNN) form a disordered region. N-linked (GlcNAc...) asparagine glycosylation is found at asparagine 482 and asparagine 515. The active-site Charge relay system is the histidine 523. N-linked (GlcNAc...) asparagine glycosylation is found at asparagine 584 and asparagine 616. The Charge relay system role is filled by serine 701. Asparagine 720 carries an N-linked (GlcNAc...) asparagine glycan.

Belongs to the peptidase S8 family.

It localises to the secreted. It catalyses the reaction Hydrolysis of proteins with broad specificity for peptide bonds, and a preference for a large uncharged residue in P1. Hydrolyzes peptide amides.. In terms of biological role, serine protease which may cleave PFN/profilin. The polypeptide is Subtilisin-like protease 3 (Plasmodium falciparum (isolate 3D7)).